A 190-amino-acid chain; its full sequence is uncharacterized protein (190 aa).

This is an uncharacterized protein from Acidianus hospitalis (AFV-1).